A 233-amino-acid polypeptide reads, in one-letter code: MMTRGRKENSNETSPSPTLLLHGGVIDIPLNTDSGVTKNTPGEIALLRFKSVSKLWSSIISSRRDFIESIVTRFLTQPPHDAHFIFGFDSGPYVECFLGLSSTYPPNTDIEAVLSIPGRMAQYVYGLMCCLSGFKDAKKETQGWSRIFFHEMHGFSNWRILGATCGGEILFAKWMYCIYHYEDKLLCVLYYEPKRNSMRGVDVEGTLPNDTRRYRFVIIWTIPDHVQNTMYLY.

Positions 22-69 (HGGVIDIPLNTDSGVTKNTPGEIALLRFKSVSKLWSSIISSRRDFIES) constitute an F-box domain.

The polypeptide is Probable F-box protein At3g56670 (Arabidopsis thaliana (Mouse-ear cress)).